The primary structure comprises 321 residues: UDP-N-acetylenolpyruvoylglucosamine reductase (321 aa).

Residues 36–203 (FRAGGLAEVM…TGALFEGYPE (168 aa)) enclose the FAD-binding PCMH-type domain. Residue R183 is part of the active site. Residue S232 is the Proton donor of the active site. Residue E302 is part of the active site.

Belongs to the MurB family. The cofactor is FAD.

It localises to the cytoplasm. It catalyses the reaction UDP-N-acetyl-alpha-D-muramate + NADP(+) = UDP-N-acetyl-3-O-(1-carboxyvinyl)-alpha-D-glucosamine + NADPH + H(+). Its pathway is cell wall biogenesis; peptidoglycan biosynthesis. In terms of biological role, cell wall formation. This Agrobacterium fabrum (strain C58 / ATCC 33970) (Agrobacterium tumefaciens (strain C58)) protein is UDP-N-acetylenolpyruvoylglucosamine reductase.